A 366-amino-acid polypeptide reads, in one-letter code: tRNA/tmRNA (uracil-C(5))-methyltransferase (366 aa).

The S-adenosyl-L-methionine site is built by Q190, Y218, N223, E239, and D299. The active-site Nucleophile is the C324. The Proton acceptor role is filled by E358.

It belongs to the class I-like SAM-binding methyltransferase superfamily. RNA M5U methyltransferase family. TrmA subfamily.

It catalyses the reaction uridine(54) in tRNA + S-adenosyl-L-methionine = 5-methyluridine(54) in tRNA + S-adenosyl-L-homocysteine + H(+). The enzyme catalyses uridine(341) in tmRNA + S-adenosyl-L-methionine = 5-methyluridine(341) in tmRNA + S-adenosyl-L-homocysteine + H(+). Its function is as follows. Dual-specificity methyltransferase that catalyzes the formation of 5-methyluridine at position 54 (m5U54) in all tRNAs, and that of position 341 (m5U341) in tmRNA (transfer-mRNA). The sequence is that of tRNA/tmRNA (uracil-C(5))-methyltransferase from Salmonella agona (strain SL483).